The chain runs to 217 residues: UPF0319 protein VS_II0881 (217 aa).

The N-terminal stretch at 1–21 is a signal peptide; sequence MKTIQSIALLSAIVAAPSVLA.

It belongs to the UPF0319 family.

This is UPF0319 protein VS_II0881 from Vibrio atlanticus (strain LGP32) (Vibrio splendidus (strain Mel32)).